Reading from the N-terminus, the 532-residue chain is Cytochrome P450 714B2 (532 aa).

The Lumenal portion of the chain corresponds to 1 to 2 (ME). Residues 3–23 (VGMVVVVAAKVLVSLWCVGAC) form a helical; Signal-anchor for type III membrane protein membrane-spanning segment. Residues 24–532 (CLAAYLYRVV…LTRVQGAYRH (509 aa)) are Cytoplasmic-facing. C474 is a heme binding site.

Belongs to the cytochrome P450 family. It depends on heme as a cofactor. Highly expressed in shoot, spikelet and uppermost internode. Detected in roots, leaves and anthers.

The protein resides in the membrane. Functionally, catalyzes the 13-hydroxylation of gibberellins (GAs). Determines the ratio of GA4 and GA1. Converts GA12 into GA53. The polypeptide is Cytochrome P450 714B2 (CYP714B2) (Oryza sativa subsp. japonica (Rice)).